A 605-amino-acid polypeptide reads, in one-letter code: Exo-beta-1,3-glucanase (605 aa).

The interval 1-23 is disordered; sequence MHVPPTDPARSAPPASPHRRRRP. A signal peptide spans 1 to 44; that stretch reads MHVPPTDPARSAPPASPHRRRRPKALGLTALAAAMLMAVPTTQA. Residues glutamine 174, 194–196, glutamine 217, 446–449, and 480–481 contribute to the substrate site; these read YGW, WRAD, and EH. Residue glutamate 502 is the Proton donor of the active site. Tyrosine 505 contributes to the substrate binding site.

This sequence belongs to the glycosyl hydrolase 55 family.

The protein localises to the secreted. It carries out the reaction Successive hydrolysis of beta-D-glucose units from the non-reducing ends of (1-&gt;3)-beta-D-glucans, releasing alpha-glucose.. Exo-beta-1,3-glucanase that specifically hydrolyzes laminarin and laminarioligosaccharides, producing glucose and laminaribiose as end products. This Streptomyces sp. (strain SirexAA-E / ActE) protein is Exo-beta-1,3-glucanase.